A 110-amino-acid polypeptide reads, in one-letter code: U1-lycotoxin-Ls1ii (110 aa).

Positions 1-20 are cleaved as a signal peptide; that stretch reads MKFVLLFGVLLVTLFSYSSA. A propeptide spanning residues 21–44 is cleaved from the precursor; sequence EMLDDFDQADEDELLSLIEKEEAR. 4 disulfide bridges follow: cysteine 47-cysteine 62, cysteine 54-cysteine 71, cysteine 61-cysteine 89, and cysteine 73-cysteine 87.

Belongs to the neurotoxin 19 (CSTX) family. 03 subfamily. In terms of tissue distribution, expressed by the venom gland.

The protein resides in the secreted. The polypeptide is U1-lycotoxin-Ls1ii (Lycosa singoriensis (Wolf spider)).